Here is a 128-residue protein sequence, read N- to C-terminus: Large ribosomal subunit protein bL19 (128 aa).

The protein belongs to the bacterial ribosomal protein bL19 family.

Its function is as follows. This protein is located at the 30S-50S ribosomal subunit interface and may play a role in the structure and function of the aminoacyl-tRNA binding site. In Caldicellulosiruptor bescii (strain ATCC BAA-1888 / DSM 6725 / KCTC 15123 / Z-1320) (Anaerocellum thermophilum), this protein is Large ribosomal subunit protein bL19.